Here is a 467-residue protein sequence, read N- to C-terminus: Phosphomethylpyrimidine synthase (467 aa).

Substrate contacts are provided by residues asparagine 80, methionine 109, tyrosine 139, histidine 175, 195–197 (SRG), 236–239 (DSLR), and glutamate 275. Histidine 279 serves as a coordination point for Zn(2+). Tyrosine 302 is a substrate binding site. Histidine 343 serves as a coordination point for Zn(2+). [4Fe-4S] cluster contacts are provided by cysteine 423, cysteine 426, and cysteine 431.

It belongs to the ThiC family. It depends on [4Fe-4S] cluster as a cofactor.

It carries out the reaction 5-amino-1-(5-phospho-beta-D-ribosyl)imidazole + S-adenosyl-L-methionine = 4-amino-2-methyl-5-(phosphooxymethyl)pyrimidine + CO + 5'-deoxyadenosine + formate + L-methionine + 3 H(+). It functions in the pathway cofactor biosynthesis; thiamine diphosphate biosynthesis. Its function is as follows. Catalyzes the synthesis of the hydroxymethylpyrimidine phosphate (HMP-P) moiety of thiamine from aminoimidazole ribotide (AIR) in a radical S-adenosyl-L-methionine (SAM)-dependent reaction. This Synechococcus sp. (strain WH7803) protein is Phosphomethylpyrimidine synthase.